We begin with the raw amino-acid sequence, 279 residues long: HTH-type transcriptional regulator BhcR (279 aa).

Over residues Met1–Gly13 the composition is skewed to basic residues. A disordered region spans residues Met1–Glu21. One can recognise an HTH iclR-type domain in the interval Ile26 to Pro87. A DNA-binding region (H-T-H motif) is located at residues Leu47–Val66. The 170-residue stretch at Leu102 to Pro271 folds into the IclR-ED domain.

In terms of biological role, transcriptional regulator of the bhc gene cluster involved in glycolate and glyoxylate assimilation via the beta-hydroxyaspartate cycle (BHAC). Glyoxylate negatively affects the interaction of BhcR with the promoter region of the bhc gene cluster. In Paracoccus denitrificans (strain Pd 1222), this protein is HTH-type transcriptional regulator BhcR.